The primary structure comprises 346 residues: Holliday junction branch migration complex subunit RuvB (346 aa).

Over residues methionine 1–alanine 11 the composition is skewed to polar residues. The segment at methionine 1–alanine 20 is disordered. A large ATPase domain (RuvB-L) region spans residues methionine 1 to tyrosine 183. ATP is bound by residues isoleucine 22, arginine 23, glycine 64, lysine 67, threonine 68, threonine 69, glutamate 130–phenylalanine 132, arginine 173, tyrosine 183, and arginine 220. Threonine 68 lines the Mg(2+) pocket. The segment at serine 184–lysine 254 is small ATPAse domain (RuvB-S). A head domain (RuvB-H) region spans residues proline 257–phenylalanine 346. DNA is bound by residues arginine 293, arginine 312, and arginine 317.

It belongs to the RuvB family. Homohexamer. Forms an RuvA(8)-RuvB(12)-Holliday junction (HJ) complex. HJ DNA is sandwiched between 2 RuvA tetramers; dsDNA enters through RuvA and exits via RuvB. An RuvB hexamer assembles on each DNA strand where it exits the tetramer. Each RuvB hexamer is contacted by two RuvA subunits (via domain III) on 2 adjacent RuvB subunits; this complex drives branch migration. In the full resolvosome a probable DNA-RuvA(4)-RuvB(12)-RuvC(2) complex forms which resolves the HJ.

The protein resides in the cytoplasm. The catalysed reaction is ATP + H2O = ADP + phosphate + H(+). In terms of biological role, the RuvA-RuvB-RuvC complex processes Holliday junction (HJ) DNA during genetic recombination and DNA repair, while the RuvA-RuvB complex plays an important role in the rescue of blocked DNA replication forks via replication fork reversal (RFR). RuvA specifically binds to HJ cruciform DNA, conferring on it an open structure. The RuvB hexamer acts as an ATP-dependent pump, pulling dsDNA into and through the RuvAB complex. RuvB forms 2 homohexamers on either side of HJ DNA bound by 1 or 2 RuvA tetramers; 4 subunits per hexamer contact DNA at a time. Coordinated motions by a converter formed by DNA-disengaged RuvB subunits stimulates ATP hydrolysis and nucleotide exchange. Immobilization of the converter enables RuvB to convert the ATP-contained energy into a lever motion, pulling 2 nucleotides of DNA out of the RuvA tetramer per ATP hydrolyzed, thus driving DNA branch migration. The RuvB motors rotate together with the DNA substrate, which together with the progressing nucleotide cycle form the mechanistic basis for DNA recombination by continuous HJ branch migration. Branch migration allows RuvC to scan DNA until it finds its consensus sequence, where it cleaves and resolves cruciform DNA. In Xanthomonas campestris pv. campestris (strain ATCC 33913 / DSM 3586 / NCPPB 528 / LMG 568 / P 25), this protein is Holliday junction branch migration complex subunit RuvB.